The sequence spans 276 residues: ADP-dependent (S)-NAD(P)H-hydrate dehydratase (276 aa).

The 265-residue stretch at 5 to 269 folds into the YjeF C-terminal domain; that stretch reads TPKAMCAWIP…EELPTYLKIF (265 aa). Residues Ala40, Gly103, and His152 each contribute to the (6S)-NADPHX site. Residue Gly211 participates in AMP binding. Asp212 contacts (6S)-NADPHX.

The protein belongs to the NnrD/CARKD family. In terms of assembly, homotetramer. It depends on Mg(2+) as a cofactor.

It carries out the reaction (6S)-NADHX + ADP = AMP + phosphate + NADH + H(+). The catalysed reaction is (6S)-NADPHX + ADP = AMP + phosphate + NADPH + H(+). Its function is as follows. Catalyzes the dehydration of the S-form of NAD(P)HX at the expense of ADP, which is converted to AMP. Together with NAD(P)HX epimerase, which catalyzes the epimerization of the S- and R-forms, the enzyme allows the repair of both epimers of NAD(P)HX, a damaged form of NAD(P)H that is a result of enzymatic or heat-dependent hydration. The chain is ADP-dependent (S)-NAD(P)H-hydrate dehydratase from Listeria monocytogenes serovar 1/2a (strain ATCC BAA-679 / EGD-e).